A 263-amino-acid polypeptide reads, in one-letter code: Hemophilin (263 aa).

The signal sequence occupies residues 1-20; the sequence is MKISQLFLGLVACSTAFAYA. Histidine 42, tyrosine 58, serine 104, and histidine 105 together coordinate heme b.

In terms of assembly, monomer in solution. Interacts with host hemoglobin.

Its subcellular location is the secreted. In terms of biological role, part of a high affinity heme acquisition system. Functions as a hemophore that acquires heme from human hemoglobin and delivers the heme to its cognate receptor, HphR, facilitating transport of heme across the bacterial outer membrane. Apo HphA interacts specifically with human hemoglobin and steals heme through a passive process probably due to its high affinity for heme. It can also acquire heme complexed to human serum albumin. Plays a supporting role for full virulence, acting as an accessory factor that enhances the process of heme uptake. This is Hemophilin from Acinetobacter baumannii.